Consider the following 2645-residue polypeptide: Non-reducing polyketide synthase AC (2645 aa).

An N-terminal acylcarrier protein transacylase domain (SAT) region spans residues 73–2366 (ALQNLNEWLK…TDIVHNAWPM (2294 aa)). His260 functions as the Proton donor/acceptor; for transacylase activity in the catalytic mechanism. The 419-residue stretch at 416-834 (DDKIAVIGMA…GSNSSLVVTE (419 aa)) folds into the Ketosynthase family 3 (KS3) domain. Catalysis depends on for beta-ketoacyl synthase activity residues Cys583, His718, and His757. Residues 943–1252 (CFGGQISTYI…HAVSITTDKS (310 aa)) form a malonyl-CoA:ACP transacylase (MAT) domain region. The segment at 1324-1457 (SKGFTSFAGY…GVCSFCSATD (134 aa)) is N-terminal hotdog fold. Residues 1324 to 1637 (SKGFTSFAGY…YNKVPLPVMR (314 aa)) enclose the PKS/mFAS DH domain. Positions 1330–1641 (FAGYIDGNQR…PLPVMRGILG (312 aa)) are product template (PT) domain. Residue His1359 is the Proton acceptor; for dehydratase activity of the active site. Positions 1487–1637 (NIMQGTANIY…YNKVPLPVMR (151 aa)) are C-terminal hotdog fold. The Proton donor; for dehydratase activity role is filled by Asp1542. Residues 1684 to 1696 (NGTTGTENPQIKS) show a composition bias toward polar residues. A disordered region spans residues 1684–1716 (NGTTGTENPQIKSKTNKVKKVPTRKSGGSDLET). The span at 1697 to 1706 (KTNKVKKVPT) shows a compositional bias: basic residues. Positions 1711 to 1788 (GSDLETPAKT…SLVKYIREIR (78 aa)) constitute a Carrier domain. Ser1748 carries the O-(pantetheine 4'-phosphoryl)serine modification. Residues 1794–1805 (QNVDDSESESEE) show a composition bias toward acidic residues. The disordered stretch occupies residues 1794 to 1816 (QNVDDSESESEELQQQATPIDSA). Tyr2009 serves as the catalytic For methyltransferase activity. Residues 2023 to 2197 (EVFVEKIGSS…SVGYGHVDWT (175 aa)) are methyltransferase (CMeT) domain. Residues 2269 to 2573 (CVLITGATGS…NIIPFYDWVQ (305 aa)) form an NADPH-binding (R) domain region.

Its pathway is mycotoxin biosynthesis. In terms of biological role, non-reducing polyketide synthase; part of the gene cluster that mediates the biosynthesis of the selective antifungal agent ascochitine, an o-quinone methide that plays a possible protective role against other microbial competitors in nature and is considered to be important for pathogenicity of legume-associated Didymella species. The pathway probably begins with the synthesis of a keto-aldehyde intermediate by the ascochitine non-reducing polyketide synthase pksAC from successive condensations of 4 malonyl-CoA units, presumably with a simple acetyl-CoA starter unit. Release of the keto-aldehyde intermediate is consistent with the presence of the C-terminal reductive release domain. The HR-PKS (orf7) probably makes a diketide starter unit which is passed to the non-reducing polyketide synthase pksAC for further extension, producing ascochital and ascochitine. The aldehyde dehydrogenase (orf1), the 2-oxoglutarate-dependent dioxygenase (orf3) and the dehydrogenase (orf9) are probably involved in subsequent oxidations of methyl groups to the carboxylic acid of the heterocyclic ring. The ascochitine gene cluster also includes a gene encoding a short peptide (orf2) that is often found in secondary metabolite gene clusters and which function has still to be determined. This chain is Non-reducing polyketide synthase AC, found in Didymella fabae (Leaf and pod spot disease fungus).